A 524-amino-acid polypeptide reads, in one-letter code: Bifunctional methyltransferase (524 aa).

The interval 1-306 (MQCSIKQILS…GHSRVILFSP (306 aa)) is hemK. Residues 1–308 (MQCSIKQILS…SRVILFSPIN (308 aa)) form an RF MTase region. S-adenosyl-L-methionine contacts are provided by residues 146–150 (GTGSG), Asp-169, Trp-198, Asn-213, Glu-353, Glu-378, Asn-405, and Asp-427. 213-216 (NPPY) lines the substrate pocket. The tRNA (guanine-N(7)-)-methyltransferase stretch occupies residues 307–524 (INLNRSYARR…MILRHVLGDH (218 aa)). Residues 311-524 (RSYARRIGKS…MILRHVLGDH (214 aa)) form a tRNA MTase region. Asp-427 is a catalytic residue. Substrate-binding residues include Lys-431 and Asp-463.

In the C-terminal section; belongs to the class I-like SAM-binding methyltransferase superfamily. TrmB family. It in the N-terminal section; belongs to the protein N5-glutamine methyltransferase family. PrmC subfamily.

It catalyses the reaction L-glutaminyl-[peptide chain release factor] + S-adenosyl-L-methionine = N(5)-methyl-L-glutaminyl-[peptide chain release factor] + S-adenosyl-L-homocysteine + H(+). The catalysed reaction is guanosine(46) in tRNA + S-adenosyl-L-methionine = N(7)-methylguanosine(46) in tRNA + S-adenosyl-L-homocysteine. In terms of biological role, methylates the class 1 translation termination release factors RF1/PrfA and RF2/PrfB on the glutamine residue of the universally conserved GGQ motif. Functionally, catalyzes the formation of N(7)-methylguanine at position 46 (m7G46) in tRNA. This Rickettsia conorii (strain ATCC VR-613 / Malish 7) protein is Bifunctional methyltransferase (prmC/trmB).